Consider the following 472-residue polypeptide: Estrogen receptor beta (472 aa).

Residues 1-104 (MAFCSPAMMN…NPGSKRDAHF (104 aa)) form a modulating region. 2 NR C4-type zinc fingers span residues 105-125 (CAVC…CEGC) and 141-165 (CPAT…LRKC). A DNA-binding region (nuclear receptor) is located at residues 105–170 (CAVCSDYASG…RLRKCYEVGM (66 aa)). One can recognise an NR LBD domain in the interval 217-449 (SPEQFVLTLL…DLLLEMLNAH (233 aa)).

It belongs to the nuclear hormone receptor family. NR3 subfamily. As to quaternary structure, binds DNA as a homodimer. Can form a heterodimer with ER-alpha. In terms of tissue distribution, a high expression is seen in the telencephalon, diencephalon, pituitary, testis and kidneys but little or no expression is seen in the cerebellum, pectoral muscle and adrenal gland.

It is found in the nucleus. Functionally, binds estrogens with an affinity similar to that of ER-alpha, and activates expression of reporter genes containing estrogen response elements (ERE) in an estrogen-dependent manner. This chain is Estrogen receptor beta (ESR2), found in Coturnix japonica (Japanese quail).